The chain runs to 436 residues: Transcription factor MYB124 (436 aa).

Over residues 1–11 the composition is skewed to basic residues; it reads MEDTKKKKKKN. The tract at residues 1-23 is disordered; the sequence is MEDTKKKKKKNINNNQDSKKKER. A Nuclear localization signal 1 motif is present at residues 8-15; the sequence is KKKNINNN. 2 consecutive HTH myb-type domains span residues 20-71 and 72-126; these read KKER…YTYL and NSDF…KKRA. DNA-binding regions (H-T-H motif) lie at residues 48-71 and 99-122; these read WAIIASKFKDKSTRQCRRRWYTYL and WTEIAKVVSGRTDNAVKNRFTTLC. Positions 151–158 match the Nuclear localization signal 2 motif; the sequence is PRKSENET. Residues 309 to 328 are disordered; it reads SWRQPDLHDSPASSEYSSGS. The span at 319 to 328 shows a compositional bias: polar residues; sequence PASSEYSSGS.

As to quaternary structure, interacts with RBR1. Expressed in all shoot organs with higher levels in leaves, stems, flowers, siliques and floral buds. Also detected in roots tips.

Its subcellular location is the nucleus. Its function is as follows. Transcription factor that binds to DNA in promoters cis-regulatory element 5'-GGCGCGC-3' of cell cycle genes, including cyclins, cyclin-dependent kinases (CDKs), and components of the pre-replication complex. Binds to DNA in promoters cis-regulatory element 5'-AGCCG-3' of auxin regulated genes (e.g. PIN3 and PIN7). Together with FAMA and MYB88, ensures that stomata contain just two guard cells (GCs) by enforcing a single symmetric precursor cell division before stomatal maturity. Represses the expression of the mitosis-inducing factors CDKB1-1 and CDKA-1, specifically required for the last guard mother cells (GMC) symmetric divisions in the stomatal pathway. Represses CYCA2-3 in newly formed guard cells. Together with MYB88, regulates stomata spacing by restricting divisions late in the stomatal cell lineage thus limiting the number of GMC divisions. In collaboration with CDKB1-1 and CDKB1-2, restrict the G1/S transition and chloroplast and nuclear number during stomatal formation, and normally maintain fate and developmental progression throughout the stomatal cell lineage. Also involved in the shape regulation of pavement cells. Involved in sensing and/or transducing abiotic stress (e.g. drought and salt), probably via the positive regulation of NAC019. Regulates female reproduction being required for entry into megasporogenesis, probably via the regulation of cell cycle genes. Promotes histone H3K27me3 marks and represses stem cell gene expression. Required for lateral roots (LRs) initiation via the regulation of PIN3 expression in an auxin-dependent manner. Involved in responses to gravity stimulation in primary roots by regulating the transcription of PIN3 and PIN7 in gravity-sensing cells, thus modulating auxin asymmetric redistribution. This is Transcription factor MYB124 from Arabidopsis thaliana (Mouse-ear cress).